We begin with the raw amino-acid sequence, 196 residues long: Heat shock protein beta-8 (196 aa).

Residues Ser24 and Ser57 each carry the phosphoserine modification. A Phosphothreonine; by PKC; in vitro modification is found at Thr63. Asymmetric dimethylarginine occurs at positions 71 and 78. Positions 74 to 185 (TATARFGVPA…TFGESSFNNE (112 aa)) constitute a sHSP domain. Residues 176–196 (TFGESSFNNELPQDSQEVTCT) form a disordered region. Positions 177-196 (FGESSFNNELPQDSQEVTCT) are enriched in polar residues.

Belongs to the small heat shock protein (HSP20) family. As to quaternary structure, monomer. Forms a ternary complex with BAG3 and HSPA1A. Component of the chaperone-assisted selective autophagy (CASA) complex consisting of BAG3, HSPA8/HSC70, HSPB8 and STUB1/CHIP. Interacts with HSPB1. Interacts with DNAJB6. Interacts with BAG3. In terms of tissue distribution, predominantly expressed in skeletal muscle and heart.

It is found in the cytoplasm. The protein resides in the nucleus. Involved in the chaperone-assisted selective autophagy (CASA), a crucial process for protein quality control, particularly in mechanical strained cells and tissues such as muscle. Displays temperature-dependent chaperone activity. The polypeptide is Heat shock protein beta-8 (HSPB8) (Homo sapiens (Human)).